The primary structure comprises 39 residues: Phosphatase RapI inhibitor (39 aa).

Positions 1 to 34 are excised as a propeptide; that stretch reads MKISRILLAAVILSSVFSITYLQSDHNTEIKVAA.

It belongs to the Phr family. In terms of processing, contains a predicted signal peptide cleavage site in the N-terminal region, however the propeptide is probably subject to only one processing event, at the N-terminal end of the mature peptide.

Its subcellular location is the secreted. The protein localises to the cytoplasm. Intercellular signaling molecule that inhibits excision of the mobile genetic element ICEBs1 when cells are crowded by cells that contain ICEBs1 and produce the PhrI peptide. Secreted during production, but the mature peptide acts intracellularly, indicating that it needs to be imported into the cell to function. Acts by inhibiting RapI activity. In Bacillus subtilis (strain 168), this protein is Phosphatase RapI inhibitor (phrI).